We begin with the raw amino-acid sequence, 271 residues long: Thiazole synthase (271 aa).

Lys-108 acts as the Schiff-base intermediate with DXP in catalysis. 1-deoxy-D-xylulose 5-phosphate contacts are provided by residues Gly-169, 195 to 196, and 217 to 218; these read AG and NS.

Belongs to the ThiG family. In terms of assembly, homotetramer. Forms heterodimers with either ThiH or ThiS.

It localises to the cytoplasm. It carries out the reaction [ThiS sulfur-carrier protein]-C-terminal-Gly-aminoethanethioate + 2-iminoacetate + 1-deoxy-D-xylulose 5-phosphate = [ThiS sulfur-carrier protein]-C-terminal Gly-Gly + 2-[(2R,5Z)-2-carboxy-4-methylthiazol-5(2H)-ylidene]ethyl phosphate + 2 H2O + H(+). Its pathway is cofactor biosynthesis; thiamine diphosphate biosynthesis. Its function is as follows. Catalyzes the rearrangement of 1-deoxy-D-xylulose 5-phosphate (DXP) to produce the thiazole phosphate moiety of thiamine. Sulfur is provided by the thiocarboxylate moiety of the carrier protein ThiS. In vitro, sulfur can be provided by H(2)S. This chain is Thiazole synthase, found in Prochlorococcus marinus (strain SARG / CCMP1375 / SS120).